The chain runs to 334 residues: Protein U17/U16 (334 aa).

This sequence belongs to the herpesviridae US22 family. In terms of processing, isoform 1 is not glycosylated.

In terms of biological role, isoform 3 can transactivate the human immunodeficiency virus type 1 promoter. The polypeptide is Protein U17/U16 (U17/U16) (Homo sapiens (Human)).